A 189-amino-acid polypeptide reads, in one-letter code: Elongation factor P (189 aa).

N6-(3,6-diaminohexanoyl)-5-hydroxylysine is present on Lys-34.

This sequence belongs to the elongation factor P family. May be beta-lysylated on the epsilon-amino group of Lys-34 by the combined action of EpmA and EpmB, and then hydroxylated on the C5 position of the same residue by EpmC (if this protein is present). Lysylation is critical for the stimulatory effect of EF-P on peptide-bond formation. The lysylation moiety may extend toward the peptidyltransferase center and stabilize the terminal 3-CCA end of the tRNA. Hydroxylation of the C5 position on Lys-34 may allow additional potential stabilizing hydrogen-bond interactions with the P-tRNA.

The protein localises to the cytoplasm. Its pathway is protein biosynthesis; polypeptide chain elongation. Involved in peptide bond synthesis. Alleviates ribosome stalling that occurs when 3 or more consecutive Pro residues or the sequence PPG is present in a protein, possibly by augmenting the peptidyl transferase activity of the ribosome. Modification of Lys-34 is required for alleviation. This chain is Elongation factor P, found in Dichelobacter nodosus (strain VCS1703A).